The sequence spans 517 residues: Tyrosine-protein kinase Src42A (517 aa).

A disordered region spans residues 1 to 47; the sequence is MGNCLTTQKGEPDKPADRIKLDDPPTIGVGVGVPQIPMPSHAGQPPE. Over residues 10 to 23 the composition is skewed to basic and acidic residues; sequence GEPDKPADRIKLDD. The region spanning 63 to 124 is the SH3 domain; it reads ANAKIFVALY…PSNYVAKLKS (62 aa). One can recognise an SH2 domain in the interval 130 to 222; the sequence is WYFRKIKRIE…GLCVNLCKPC (93 aa). The Protein kinase domain occupies 248–504; sequence LKFVRKLGSG…TLQWKLEDFY (257 aa). ATP is bound by residues 254-262 and K276; that span reads LGSGQFGDV. Residue D370 is the Proton acceptor of the active site.

This sequence belongs to the protein kinase superfamily. Tyr protein kinase family. SRC subfamily. Ubiquitous in early embryos, in stages 13-16 expression is seen in visceral mesoderm, hindgut, brain, anal pads and ventral ganglions. In larvae, expression is in CNS, wing disk, leg disk and photoreceptor precursors in the eye-antenna disks posterior to the morphogenetic furrow.

It catalyses the reaction L-tyrosyl-[protein] + ATP = O-phospho-L-tyrosyl-[protein] + ADP + H(+). Required directly or indirectly for the phosphorylation of drpr which is necessary for the interaction of drpr with shark and subsequent glial phagocytic activity. Together with drpr and shark, promotes the migration of macrophages to sites of wounding as part of a signaling cascade where Src42A detects production of hydrogen peroxide at wound sites which triggers phosphorylation of drpr and subsequent recruitment and activation of shark. Essential for correct eye morphogenesis (ommatidial R7 neuron formation) which requires the Ras1/MAPK signal transduction pathway. May be involved in the regulation of cytoskeleton organization and cell-cell contacts in developing ommatidia. Involved in phosphorylation of Dscam1, a cell surface receptor involved in targeting of growing axons during eye morphogenesis, and its interaction partner the SH2/SH3 adapter protein dock/dreadlocks. During embryogenesis, involved in regulation of dorsal closure where it may have a role in activating the JNK pathway in leading edge cells during this process. The sequence is that of Tyrosine-protein kinase Src42A from Drosophila melanogaster (Fruit fly).